The sequence spans 207 residues: Thiamine-phosphate synthase (207 aa).

4-amino-2-methyl-5-(diphosphooxymethyl)pyrimidine-binding positions include 35–39 and N67; that span reads QYRDK. Mg(2+)-binding residues include D68 and D86. T105 contributes to the 4-amino-2-methyl-5-(diphosphooxymethyl)pyrimidine binding site. 2-[(2R,5Z)-2-carboxy-4-methylthiazol-5(2H)-ylidene]ethyl phosphate is bound at residue 132–134; that stretch reads SVT. A 4-amino-2-methyl-5-(diphosphooxymethyl)pyrimidine-binding site is contributed by K135. G162 provides a ligand contact to 2-[(2R,5Z)-2-carboxy-4-methylthiazol-5(2H)-ylidene]ethyl phosphate.

This sequence belongs to the thiamine-phosphate synthase family. Requires Mg(2+) as cofactor.

It catalyses the reaction 2-[(2R,5Z)-2-carboxy-4-methylthiazol-5(2H)-ylidene]ethyl phosphate + 4-amino-2-methyl-5-(diphosphooxymethyl)pyrimidine + 2 H(+) = thiamine phosphate + CO2 + diphosphate. It carries out the reaction 2-(2-carboxy-4-methylthiazol-5-yl)ethyl phosphate + 4-amino-2-methyl-5-(diphosphooxymethyl)pyrimidine + 2 H(+) = thiamine phosphate + CO2 + diphosphate. The enzyme catalyses 4-methyl-5-(2-phosphooxyethyl)-thiazole + 4-amino-2-methyl-5-(diphosphooxymethyl)pyrimidine + H(+) = thiamine phosphate + diphosphate. It functions in the pathway cofactor biosynthesis; thiamine diphosphate biosynthesis; thiamine phosphate from 4-amino-2-methyl-5-diphosphomethylpyrimidine and 4-methyl-5-(2-phosphoethyl)-thiazole: step 1/1. Condenses 4-methyl-5-(beta-hydroxyethyl)thiazole monophosphate (THZ-P) and 2-methyl-4-amino-5-hydroxymethyl pyrimidine pyrophosphate (HMP-PP) to form thiamine monophosphate (TMP). The chain is Thiamine-phosphate synthase from Pseudomonas putida (strain ATCC 47054 / DSM 6125 / CFBP 8728 / NCIMB 11950 / KT2440).